The following is a 910-amino-acid chain: E3 ubiquitin-protein ligase MARCHF6 (910 aa).

Residue Met1 is modified to N-acetylmethionine. The RING-CH-type zinc finger occupies 1–62 (MDTAEEDICR…ELCKHRFAFT (62 aa)). The Cytoplasmic portion of the chain corresponds to 1–91 (MDTAEEDICR…LVTSIGTAIR (91 aa)). Positions 9, 12, 26, 28, 36, 39, 52, and 55 each coordinate Zn(2+). Residues 92-112 (YWFHYTLVAFAWLGVVPLTAC) traverse the membrane as a helical segment. Topologically, residues 113 to 142 (RIYKCLFTGSVSSLLTLPLDMLSTENLLAD) are extracellular. The helical transmembrane segment at 143–163 (CLQGCFVVTCTLCAFISLVWL) threads the bilayer. At 164 to 283 (REQIVHGGAP…WERMLGLDGS (120 aa)) the chain is on the cytoplasmic side. Residues 185–256 (AAGHHQNEAP…AADANNGAQD (72 aa)) form a disordered region. The span at 223–248 (DAQDDQAEEEEEDNEEEDDAGVEDAA) shows a compositional bias: acidic residues. Residues 284–304 (LVFLEHVFWVVSLNTLFILVF) traverse the membrane as a helical segment. Over 305 to 336 (AFCPYHIGHFSLVGLGFEEHVQASHFEGLITT) the chain is Extracellular. The helical transmembrane segment at 337 to 357 (IVGYILLAITLIICHGLATLV) threads the bilayer. The Cytoplasmic portion of the chain corresponds to 358–376 (KFHRSRRLLGVCYIVVKVS). Residues 377-397 (LLVVVEIGVFPLICGWWLDIC) traverse the membrane as a helical segment. Topologically, residues 398-421 (SLEMFDATLKDRELSFQSAPGTTM) are extracellular. Residues 422-442 (FLHWLVGMVYVFYFASFILLL) traverse the membrane as a helical segment. Over 443–480 (REVLRPGVLWFLRNLNDPDFNPVQEMIHLPIYRHLRRF) the chain is Cytoplasmic. A helical membrane pass occupies residues 481 to 501 (ILSVIVFGSIVLLMLWLPIRI). The Extracellular segment spans residues 502-519 (IKSVLPNFLPYNVMLYSD). Residues 520–540 (APVSELSLELLLLQVVLPALL) traverse the membrane as a helical segment. The Cytoplasmic portion of the chain corresponds to 541–632 (EQGHTRQWLK…YRRPLNFPLR (92 aa)). A helical membrane pass occupies residues 633–653 (IFLLIVFMCITLLIASLICLT). The Extracellular portion of the chain corresponds to 654–678 (LPVFAGRWLMSFWTGTAKIHELYTA). Residues 679–699 (ACGLYVCWLTIRAVTVMVAWM) form a helical membrane-spanning segment. The Cytoplasmic portion of the chain corresponds to 700-721 (PQGRRVIFQKVKEWSLMIMKTL). A helical membrane pass occupies residues 722–742 (IVAVLLAGVVPLLLGLLFELV). Residues 743 to 764 (IVAPLRVPLDQTPLFYPWQDWA) are Extracellular-facing. A helical transmembrane segment spans residues 765-785 (LGVLHAKIIAAITLMGPQWWL). Topologically, residues 786-815 (KTVIEQVYANGIRNIDLHYIVRKLAAPVIS) are cytoplasmic. Residues 816 to 836 (VLLLSLCVPYVIASGVVPLLG) traverse the membrane as a helical segment. The Extracellular segment spans residues 837–848 (VTAEMQNLVHRR). Residues 849 to 869 (IYPFLLMVVVLMAILSFQVRQ) form a helical membrane-spanning segment. Topologically, residues 870–910 (FKRLYEHIKNDKYLVGQRLVNYERKSGKQGSSPPPPQSSQE) are cytoplasmic.

In terms of assembly, interacts with DIO2. Interacts with SQLE. Post-translationally, auto-ubiquitinated, which results in proteasomal degradation. Deubiquitinated by USP19; protecting MARCHF6 from p97-mediated proteasomal degradation. As to expression, present in brain (at protein level).

The protein resides in the endoplasmic reticulum membrane. The enzyme catalyses S-ubiquitinyl-[E2 ubiquitin-conjugating enzyme]-L-cysteine + [acceptor protein]-L-lysine = [E2 ubiquitin-conjugating enzyme]-L-cysteine + N(6)-ubiquitinyl-[acceptor protein]-L-lysine.. Its pathway is protein modification; protein ubiquitination. Functionally, endoplasmic reticulum membrane-associated E3 ubiquitin ligase that plays a critical role in mitigating endoplasmic reticulum stress, the regulation of cholesterol and lipid homeostasis, and ferroptosis. Acts as a pivotal component of both the Ac/N-degron pathway (targeting the N-terminal acetyl group of substrates) and the ER-associated protein degradation-cytosol (ERAD-C) pathway (targeting misfolded substrates). For instance, mediates the degradation of Ac/N-degron-bearing proteins such as the G-protein regulator RGS2 and the lipid droplet protein PLIN2. Suppresses endoplasmic reticulum stress and ferroptosis through cytosolic POMC degradation. Prevents ferroptosis by acting as a NADPH sensor during lipid peroxidation through its C-terminal regulatory region. Facilitates also the degradation of selected endoplasmic reticulum proteins by associating with signal peptide peptidase for the turnover of endogenous tail-anchored proteins. Promotes ubiquitination of DIO2, leading to its degradation. By ubiquitinating and thereby modulating the stability of many proteins of the cholesterol pathway including SQLE, CYP51A1, CYP11A1 and HMGCR, acts as a crucial post-translational regulator of cholesterol synthesis. The chain is E3 ubiquitin-protein ligase MARCHF6 from Homo sapiens (Human).